The primary structure comprises 187 residues: Crossover junction endodeoxyribonuclease RuvC (187 aa).

Active-site residues include Asp7, Glu67, and Asp140. Mg(2+) is bound by residues Asp7, Glu67, and Asp140.

The protein belongs to the RuvC family. As to quaternary structure, homodimer which binds Holliday junction (HJ) DNA. The HJ becomes 2-fold symmetrical on binding to RuvC with unstacked arms; it has a different conformation from HJ DNA in complex with RuvA. In the full resolvosome a probable DNA-RuvA(4)-RuvB(12)-RuvC(2) complex forms which resolves the HJ. Mg(2+) serves as cofactor.

It localises to the cytoplasm. It carries out the reaction Endonucleolytic cleavage at a junction such as a reciprocal single-stranded crossover between two homologous DNA duplexes (Holliday junction).. Functionally, the RuvA-RuvB-RuvC complex processes Holliday junction (HJ) DNA during genetic recombination and DNA repair. Endonuclease that resolves HJ intermediates. Cleaves cruciform DNA by making single-stranded nicks across the HJ at symmetrical positions within the homologous arms, yielding a 5'-phosphate and a 3'-hydroxyl group; requires a central core of homology in the junction. The consensus cleavage sequence is 5'-(A/T)TT(C/G)-3'. Cleavage occurs on the 3'-side of the TT dinucleotide at the point of strand exchange. HJ branch migration catalyzed by RuvA-RuvB allows RuvC to scan DNA until it finds its consensus sequence, where it cleaves and resolves the cruciform DNA. The sequence is that of Crossover junction endodeoxyribonuclease RuvC from Prosthecochloris aestuarii (strain DSM 271 / SK 413).